A 317-amino-acid polypeptide reads, in one-letter code: Apolipoprotein E (317 aa).

The signal sequence occupies residues 1 to 18 (MKVLWAALLVTFLAGCQA). Repeat copies occupy residues 80–101 (ALMD…EQLT), 102–123 (PVAE…ARLG), 124–145 (ADME…AMLG), 146–167 (QSTE…KRLL), 168–189 (RDAD…EGAE), 190–211 (RGVS…VRAA), 212–233 (TVGS…ERLR), and 234–255 (ARME…EQVA). The segment at 80-255 (ALMDETMKEL…RLDEVKEQVA (176 aa)) is 8 X 22 AA approximate tandem repeats. A Methionine sulfoxide modification is found at methionine 143. Serine 147 is subject to Phosphoserine. The segment at 158-168 (HLRKLRKRLLR) is LDL and other lipoprotein receptors binding. Residue 162–165 (LRKR) participates in heparin binding. The segment at 210–290 (AATVGSLAGQ…SWFEPLVEDM (81 aa)) is lipid-binding and lipoprotein association. 229-236 (GERLRARM) contacts heparin. Residues 266-317 (QQIRLQAEAFQARLKSWFEPLVEDMQRQWAGLVEKVQAAVGTSAAPVPSDNH) form a homooligomerization region. The segment at 278–290 (RLKSWFEPLVEDM) is specificity for association with VLDL.

It belongs to the apolipoprotein A1/A4/E family. In terms of assembly, homotetramer. May interact with ABCA1; functionally associated with ABCA1 in the biogenesis of HDLs. May interact with APP/A4 amyloid-beta peptide; the interaction is extremely stable in vitro but its physiological significance is unclear. May interact with MAPT. May interact with MAP2. In the cerebrospinal fluid, interacts with secreted SORL1. Interacts with PMEL; this allows the loading of PMEL luminal fragment on ILVs to induce fibril nucleation. In terms of processing, APOE exists as multiple glycosylated and sialylated glycoforms within cells and in plasma. The extent of glycosylation and sialylation are tissue and context specific. Glycated in plasma VLDL. Post-translationally, phosphorylated by FAM20C in the extracellular medium.

Its subcellular location is the secreted. It is found in the extracellular space. It localises to the extracellular matrix. The protein resides in the extracellular vesicle. The protein localises to the endosome. Its subcellular location is the multivesicular body. APOE is an apolipoprotein, a protein associating with lipid particles, that mainly functions in lipoprotein-mediated lipid transport between organs via the plasma and interstitial fluids. APOE is a core component of plasma lipoproteins and is involved in their production, conversion and clearance. Apolipoproteins are amphipathic molecules that interact both with lipids of the lipoprotein particle core and the aqueous environment of the plasma. As such, APOE associates with chylomicrons, chylomicron remnants, very low density lipoproteins (VLDL) and intermediate density lipoproteins (IDL) but shows a preferential binding to high-density lipoproteins (HDL). It also binds a wide range of cellular receptors including the LDL receptor/LDLR, the LDL receptor-related proteins LRP1, LRP2 and LRP8 and the very low-density lipoprotein receptor/VLDLR that mediate the cellular uptake of the APOE-containing lipoprotein particles. Finally, APOE also has a heparin-binding activity and binds heparan-sulfate proteoglycans on the surface of cells, a property that supports the capture and the receptor-mediated uptake of APOE-containing lipoproteins by cells. A main function of APOE is to mediate lipoprotein clearance through the uptake of chylomicrons, VLDLs, and HDLs by hepatocytes. APOE is also involved in the biosynthesis by the liver of VLDLs as well as their uptake by peripheral tissues ensuring the delivery of triglycerides and energy storage in muscle, heart and adipose tissues. By participating in the lipoprotein-mediated distribution of lipids among tissues, APOE plays a critical role in plasma and tissues lipid homeostasis. APOE is also involved in two steps of reverse cholesterol transport, the HDLs-mediated transport of cholesterol from peripheral tissues to the liver, and thereby plays an important role in cholesterol homeostasis. First, it is functionally associated with ABCA1 in the biogenesis of HDLs in tissues. Second, it is enriched in circulating HDLs and mediates their uptake by hepatocytes. APOE also plays an important role in lipid transport in the central nervous system, regulating neuron survival and sprouting. The chain is Apolipoprotein E (APOE) from Hylobates lar (Lar gibbon).